A 581-amino-acid chain; its full sequence is A-type ATP synthase subunit A (581 aa).

232–239 (GPFGSGKT) provides a ligand contact to ATP.

It belongs to the ATPase alpha/beta chains family. Has multiple subunits with at least A(3), B(3), C, D, E, F, H, I and proteolipid K(x).

The protein resides in the cell membrane. It catalyses the reaction ATP + H2O + 4 H(+)(in) = ADP + phosphate + 5 H(+)(out). In terms of biological role, component of the A-type ATP synthase that produces ATP from ADP in the presence of a proton gradient across the membrane. The A chain is the catalytic subunit. The polypeptide is A-type ATP synthase subunit A (Methanocorpusculum labreanum (strain ATCC 43576 / DSM 4855 / Z)).